The sequence spans 176 residues: Oleosin Ara h 14.0102 (176 aa).

Ala2 carries the post-translational modification N-acetylalanine; alternate. The next 2 membrane-spanning stretches (helical) occupy residues 61–81 and 87–107; these read GTLL…LAIA and FFSP…IGIL. The segment at 156-176 is disordered; that stretch reads KTKDAGQEIQTKAQDVKRSSS.

The protein belongs to the oleosin family. As to quaternary structure, homodimer. Forms oligomers. As to expression, expressed in seeds (at protein level). Not expressed in leaves.

The protein localises to the lipid droplet. It is found in the membrane. Its function is as follows. May have a structural role to stabilize the lipid body during desiccation of the seed by preventing coalescence of the oil. Probably interacts with both lipid and phospholipid moieties of lipid bodies. May also provide recognition signals for specific lipase anchorage in lipolysis during seedling growth. In Arachis hypogaea (Peanut), this protein is Oleosin Ara h 14.0102.